We begin with the raw amino-acid sequence, 122 residues long: UPF0102 protein cgR_1859 (122 aa).

It belongs to the UPF0102 family.

This chain is UPF0102 protein cgR_1859, found in Corynebacterium glutamicum (strain R).